The following is a 282-amino-acid chain: 2-dehydro-3-deoxyphosphooctonate aldolase (282 aa).

The protein belongs to the KdsA family.

It localises to the cytoplasm. The enzyme catalyses D-arabinose 5-phosphate + phosphoenolpyruvate + H2O = 3-deoxy-alpha-D-manno-2-octulosonate-8-phosphate + phosphate. Its pathway is carbohydrate biosynthesis; 3-deoxy-D-manno-octulosonate biosynthesis; 3-deoxy-D-manno-octulosonate from D-ribulose 5-phosphate: step 2/3. The protein operates within bacterial outer membrane biogenesis; lipopolysaccharide biosynthesis. The chain is 2-dehydro-3-deoxyphosphooctonate aldolase from Shewanella sediminis (strain HAW-EB3).